The following is a 294-amino-acid chain: Large ribosomal subunit protein uL2 (294 aa).

Disordered stretches follow at residues 1 to 37 and 228 to 294; these read MGIR…RPEK and GSVM…RAAQ. Positions 23 to 37 are enriched in basic and acidic residues; sequence ELSRDENGKRPRPEK. The segment covering 264-285 has biased composition (basic residues); sequence KTRKRNKPSNKFIVRGRRRGGR.

The protein belongs to the universal ribosomal protein uL2 family. As to quaternary structure, part of the 50S ribosomal subunit. Forms a bridge to the 30S subunit in the 70S ribosome.

One of the primary rRNA binding proteins. Required for association of the 30S and 50S subunits to form the 70S ribosome, for tRNA binding and peptide bond formation. It has been suggested to have peptidyltransferase activity; this is somewhat controversial. Makes several contacts with the 16S rRNA in the 70S ribosome. This chain is Large ribosomal subunit protein uL2, found in Synechococcus sp. (strain JA-2-3B'a(2-13)) (Cyanobacteria bacterium Yellowstone B-Prime).